The following is a 1634-amino-acid chain: Leucine-rich repeat-containing protein 37A3 (1634 aa).

A signal peptide spans 1 to 35 (MTSAQCPALACVMSPLRFWGPWPLLMWQLLWLLVK). The Extracellular segment spans residues 36 to 1581 (EAQPLEWVKD…ELPGYGYTKK (1546 aa)). Disordered stretches follow at residues 53-104 (PLGP…ESTE), 129-154 (SQQDLKDKLSPQERLPVSPKKLKKDP), 172-531 (TPQS…VVVA), 619-642 (PEPTTEVGHSTPPKRTIVSPKHPE), and 758-777 (EPTTETGHSTALEKTTAPRP). An LRR 1 repeat occupies 137–160 (LSPQERLPVSPKKLKKDPAQRWSL). 2 stretches are compositionally biased toward polar residues: residues 172-189 (TPQSQKQTLQNEYSSTDT) and 223-237 (ETQNPETLEDIQSSS). LRR repeat units follow at residues 230 to 253 (LEDIQSSSLQQEAPAQLPQLLEEE) and 267 to 290 (ESSMESLTLPNHEVSVQPPGEDQA). Low complexity predominate over residues 238 to 249 (LQQEAPAQLPQL). Asn296 carries N-linked (GlcNAc...) asparagine glycosylation. A compositionally biased stretch (polar residues) spans 307 to 326 (TITSEPTNETESSQAQQETP). The segment covering 358–368 (SEQQQPVQPSE) has biased composition (low complexity). Positions 433 to 446 (LVHQEATTRLSGSG) are enriched in polar residues. Positions 482 to 493 (SPEPINNENPSP) are enriched in low complexity. Over residues 760–770 (TTETGHSTALE) the composition is skewed to polar residues. LRR repeat units follow at residues 864-887 (NGTFTILNFQGNYISYIDGNVWKA), 888-911 (YSWTEKLILRENNLTELHKDSFEG), 912-935 (LLSLQYLDLSCNKIQSIERHTFEP), 937-959 (PFLKFINLSCNVITELSFGTFQA), 963-987 (MQFLHKLILNHNPLTTVEDPYLFKL), and 1002-1027 (LTTLKNILMMTVELEKLIVPSHMACC). Asn1079 carries N-linked (GlcNAc...) asparagine glycosylation. 2 LRR repeats span residues 1124–1146 (LPYFSAVNLDVKSLLLPFIKLPT) and 1151–1176 (LAKIQTVGKNRQRLNRVLMGPRSIQK). Composition is skewed to basic and acidic residues over residues 1181–1191 (EVGRQSIRREQ) and 1201–1216 (AEEKRLGSPAPRELKQ). Disordered stretches follow at residues 1181 to 1227 (EVGR…EKLA) and 1306 to 1329 (RFHKTRSRMTHRTPKVKKSPKVRK). The LRR 12 repeat unit spans residues 1359-1384 (FSSLRDLSPQENPFLEVSAPSEHFIE). Residues 1582–1602 (LILALIVTGILTILIILLCLI) form a helical membrane-spanning segment. Over 1603 to 1634 (EICCHRRSLQEDEEGFSRDSEAPTEEESEALP) the chain is Cytoplasmic. The disordered stretch occupies residues 1614 to 1634 (DEEGFSRDSEAPTEEESEALP). Residues 1624–1634 (APTEEESEALP) show a composition bias toward acidic residues.

It belongs to the LRRC37A family.

Its subcellular location is the membrane. This chain is Leucine-rich repeat-containing protein 37A3 (LRRC37A3), found in Homo sapiens (Human).